A 326-amino-acid polypeptide reads, in one-letter code: Ribosome biogenesis protein BRX1 homolog (326 aa).

Basic and acidic residues predominate over residues 1–17 (MVKPSKILEKIKKRTEP). Residues 1–66 (MVKPSKILEK…EENKNIEENK (66 aa)) are disordered. Over residues 22 to 57 (VVEEESDEEIIEQEGSEEEEEIVEEESEEEEEEVEE) the composition is skewed to acidic residues. Residues 75–268 (KRVLFTSTRG…IDKIFSDGFG (194 aa)) form the Brix domain.

Belongs to the BRX1 family.

Its subcellular location is the nucleus. It is found in the nucleolus. In terms of biological role, required for biogenesis of the 60S ribosomal subunit. This chain is Ribosome biogenesis protein BRX1 homolog (bxdc2), found in Dictyostelium discoideum (Social amoeba).